The chain runs to 1215 residues: Reverse gyrase 2 (1215 aa).

The segment at 3–44 (GGVNAVYMGLCYNCGGNIDEDRLEKGLPCARCLPSPPRRATP) adopts an RG N-terminal-type zinc-finger fold. Zn(2+)-binding residues include Cys13, Cys16, Cys31, and Cys34. Residues Gln89 and 106 to 113 (APTGVGKS) each bind ATP. Positions 93-249 (AKRLVKGDSF…SLVKARLKLY (157 aa)) constitute a Helicase ATP-binding domain. A DEAD box motif is present at residues 209 to 212 (DDVD). A topoisomerase I region spans residues 614 to 1215 (VRVKTTLLVV…TGDVMGQSEA (602 aa)). The Toprim domain maps to 618–783 (TTLLVVESPT…NVRRGRFHEV (166 aa)). Glu624 is a Mg(2+) binding site. Residues 702 to 729 (IKRCLDCGAQHTSSSPFCPRCGSPRQVD) form an RG C-terminal-type zinc finger. Zn(2+)-binding residues include Cys705, Cys708, Cys719, and Cys722. Position 752 (Asp752) interacts with Mg(2+). Residues 799–1200 (EKSLIEAQKV…SVWRMVDEAV (402 aa)) enclose the Topo IA-type catalytic domain. The O-(5'-phospho-DNA)-tyrosine intermediate role is filled by Tyr943.

It in the N-terminal section; belongs to the DEAD box helicase family. DDVD subfamily. The protein in the C-terminal section; belongs to the type IA topoisomerase family. Monomer. The cofactor is Zn(2+). Mg(2+) serves as cofactor.

Its subcellular location is the cytoplasm. It carries out the reaction ATP + H2O = ADP + phosphate + H(+). Its function is as follows. Modifies the topological state of DNA by introducing positive supercoils in an ATP-dependent process, increasing the linking number in steps of +1. Binds to single-stranded DNA, transiently cleaves and then rejoins the ends, introducing a positive supercoil in the process. The scissile phosphodiester is attacked by the catalytic tyrosine of the enzyme, resulting in the formation of a DNA-(5'-phosphotyrosyl)-enzyme intermediate. Probably involved in rewinding DNA strands in regions of the chromosome that have opened up to allow replication, transcription, DNA repair and/or for DNA protection. The protein is Reverse gyrase 2 of Aeropyrum pernix (strain ATCC 700893 / DSM 11879 / JCM 9820 / NBRC 100138 / K1).